Here is an 89-residue protein sequence, read N- to C-terminus: Large ribosomal subunit protein uL30 (89 aa).

It belongs to the universal ribosomal protein uL30 family. In terms of assembly, part of the 50S ribosomal subunit.

In Myxococcus xanthus (strain DK1622), this protein is Large ribosomal subunit protein uL30.